The following is a 113-amino-acid chain: Large ribosomal subunit protein bL17 (113 aa).

Belongs to the bacterial ribosomal protein bL17 family. As to quaternary structure, part of the 50S ribosomal subunit. Contacts protein L32.

The chain is Large ribosomal subunit protein bL17 from Syntrophomonas wolfei subsp. wolfei (strain DSM 2245B / Goettingen).